We begin with the raw amino-acid sequence, 406 residues long: Bifunctional enzyme IspD/IspF (406 aa).

Residues 1–246 (MLQMPSKQPI…KLSASLLPDV (246 aa)) are 2-C-methyl-D-erythritol 4-phosphate cytidylyltransferase. The segment at 247 to 406 (RTGNGYDVHQ…ATVVYRGVKR (160 aa)) is 2-C-methyl-D-erythritol 2,4-cyclodiphosphate synthase. Positions 253 and 255 each coordinate a divalent metal cation. Residues 253–255 (DVH) and 279–280 (HS) each bind 4-CDP-2-C-methyl-D-erythritol 2-phosphate. Histidine 287 contacts a divalent metal cation. Residues 301-303 (DIG), 377-380 (TTNE), phenylalanine 384, and arginine 387 contribute to the 4-CDP-2-C-methyl-D-erythritol 2-phosphate site.

It in the N-terminal section; belongs to the IspD/TarI cytidylyltransferase family. IspD subfamily. In the C-terminal section; belongs to the IspF family. A divalent metal cation is required as a cofactor.

It carries out the reaction 2-C-methyl-D-erythritol 4-phosphate + CTP + H(+) = 4-CDP-2-C-methyl-D-erythritol + diphosphate. The catalysed reaction is 4-CDP-2-C-methyl-D-erythritol 2-phosphate = 2-C-methyl-D-erythritol 2,4-cyclic diphosphate + CMP. It participates in isoprenoid biosynthesis; isopentenyl diphosphate biosynthesis via DXP pathway; isopentenyl diphosphate from 1-deoxy-D-xylulose 5-phosphate: step 2/6. The protein operates within isoprenoid biosynthesis; isopentenyl diphosphate biosynthesis via DXP pathway; isopentenyl diphosphate from 1-deoxy-D-xylulose 5-phosphate: step 4/6. Functionally, bifunctional enzyme that catalyzes the formation of 4-diphosphocytidyl-2-C-methyl-D-erythritol from CTP and 2-C-methyl-D-erythritol 4-phosphate (MEP) (IspD), and catalyzes the conversion of 4-diphosphocytidyl-2-C-methyl-D-erythritol 2-phosphate (CDP-ME2P) to 2-C-methyl-D-erythritol 2,4-cyclodiphosphate (ME-CPP) with a corresponding release of cytidine 5-monophosphate (CMP) (IspF). In Rhizobium leguminosarum bv. trifolii (strain WSM2304), this protein is Bifunctional enzyme IspD/IspF.